Consider the following 357-residue polypeptide: UDP-N-acetylglucosamine--N-acetylmuramyl-(pentapeptide) pyrophosphoryl-undecaprenol N-acetylglucosamine transferase (357 aa).

Residues 12 to 14 (TGG), Asn-124, Arg-163, Ser-191, Ile-245, 264 to 269 (ALTVSE), and Gln-290 each bind UDP-N-acetyl-alpha-D-glucosamine.

This sequence belongs to the glycosyltransferase 28 family. MurG subfamily.

The protein resides in the cell inner membrane. The enzyme catalyses di-trans,octa-cis-undecaprenyl diphospho-N-acetyl-alpha-D-muramoyl-L-alanyl-D-glutamyl-meso-2,6-diaminopimeloyl-D-alanyl-D-alanine + UDP-N-acetyl-alpha-D-glucosamine = di-trans,octa-cis-undecaprenyl diphospho-[N-acetyl-alpha-D-glucosaminyl-(1-&gt;4)]-N-acetyl-alpha-D-muramoyl-L-alanyl-D-glutamyl-meso-2,6-diaminopimeloyl-D-alanyl-D-alanine + UDP + H(+). The protein operates within cell wall biogenesis; peptidoglycan biosynthesis. In terms of biological role, cell wall formation. Catalyzes the transfer of a GlcNAc subunit on undecaprenyl-pyrophosphoryl-MurNAc-pentapeptide (lipid intermediate I) to form undecaprenyl-pyrophosphoryl-MurNAc-(pentapeptide)GlcNAc (lipid intermediate II). The sequence is that of UDP-N-acetylglucosamine--N-acetylmuramyl-(pentapeptide) pyrophosphoryl-undecaprenol N-acetylglucosamine transferase from Nitrosospira multiformis (strain ATCC 25196 / NCIMB 11849 / C 71).